The primary structure comprises 446 residues: Rhamnogalacturonase A (446 aa).

Positions 1 to 18 (MPALPILALALAPLLVNG) are cleaved as a signal peptide. A disulfide bridge links C39 with C65. N-linked (GlcNAc...) asparagine glycosylation is found at N50, N115, and N124. Catalysis depends on D216, which acts as the Proton donor. A disulfide bridge links C218 with C235. 3 N-linked (GlcNAc...) asparagine glycosylation sites follow: N236, N281, and N318. Disulfide bonds link C341-C347 and C369-C378.

It belongs to the glycosyl hydrolase 28 family.

The protein localises to the secreted. The catalysed reaction is Endohydrolysis of alpha-D-GalA-(1-&gt;2)-alpha-L-Rha glycosidic bond in the rhamnogalacturonan I backbone with initial inversion of anomeric configuration releasing oligosaccharides with beta-D-GalA at the reducing end.. In terms of biological role, pectinolytic enzymes consist of four classes of enzymes: pectine lyase, polygalacturonase, pectin methylesterase and rhamnogalacturonase. Hydrolyzes alpha-D-galacturonopyranosyl-(1,2)-alpha-L-rhamnopyranosyl linkages in the backbone of the hairy regions of pectins. This Aspergillus niger protein is Rhamnogalacturonase A (rhgA).